The primary structure comprises 201 residues: MNTLYLGSNSPRRMEILTQLGYQVVKLPANIDETVRQNEDPARYVQRMAEEKNRTALTLFCETNGTMPDFPLITADTCVVSAGIILGKPHSQAEAIEFLNRLSGKQHTVLTAVCIHYRGNAENRVQTNRVVFKPLSSEEISAYVQSGEPMDKAGAYAVQGIGSIFIQSIEGSFSGIMGLPVYETVSMLQDLGYRTPPFIRA.

Catalysis depends on Asp-76, which acts as the Proton acceptor.

This sequence belongs to the Maf family. YhdE subfamily. Requires a divalent metal cation as cofactor.

The protein resides in the cytoplasm. It carries out the reaction dTTP + H2O = dTMP + diphosphate + H(+). It catalyses the reaction UTP + H2O = UMP + diphosphate + H(+). Nucleoside triphosphate pyrophosphatase that hydrolyzes dTTP and UTP. May have a dual role in cell division arrest and in preventing the incorporation of modified nucleotides into cellular nucleic acids. This chain is dTTP/UTP pyrophosphatase, found in Neisseria meningitidis serogroup A / serotype 4A (strain DSM 15465 / Z2491).